The sequence spans 291 residues: Glycine--tRNA ligase alpha subunit (291 aa).

It belongs to the class-II aminoacyl-tRNA synthetase family. Tetramer of two alpha and two beta subunits.

The protein localises to the cytoplasm. The enzyme catalyses tRNA(Gly) + glycine + ATP = glycyl-tRNA(Gly) + AMP + diphosphate. This chain is Glycine--tRNA ligase alpha subunit, found in Coprothermobacter proteolyticus (strain ATCC 35245 / DSM 5265 / OCM 4 / BT).